A 363-amino-acid chain; its full sequence is Transcriptional regulator AacuR (363 aa).

The tract at residues 1-24 (MTSLQCPPPDRTRRSLSPTGPKFR) is disordered. The zn(2)-C6 fungal-type DNA-binding region spans 27–54 (CKSCAASKIRCTKEKPQCARCVKRNMVC). The span at 63–72 (RRKPGARLKH) shows a compositional bias: basic residues. Positions 63-104 (RRKPGARLKHRESITTNAHHSPTTTTITTSRTTSSSPSASPK) are disordered. A compositionally biased stretch (low complexity) spans 76–102 (ITTNAHHSPTTTTITTSRTTSSSPSAS).

Its subcellular location is the nucleus. Its function is as follows. Transcriptional regulator; part of the gene cluster that mediates the biosynthesis of the tetrahydroxanthone dimer secalonic acid D. The sequence is that of Transcriptional regulator AacuR from Aspergillus aculeatus (strain ATCC 16872 / CBS 172.66 / WB 5094).